A 544-amino-acid chain; its full sequence is MVTIVLNKYKLLNKIGIGQQKLEDLLFNLKSEIKPVDESNIEIEINADRLDLLSSDGIARAIKGLLEKELGEAKYDITDTEYKLIVDNVRTRPYALAAVIYNAKIDLQELIQFQEKLHSTIGRKRKKVAIGIHDLKKIDSKRIEYREVPLSYKFIPLYEKEELTISEVLEKTEQGKLYGNISISNGVSPAIVQEDGEVLSIPPIINSDKTKLDESTKDLFIDVTGTSFEAVAQTLDIIVSNLAEAGGTIGRVKVIKTDNSFQQSSPLLIHKIQNVREEYANKILGIKISEEEICKHITRMRMNCNVENGIIRVTVPQYRVDIINEIDIVEDIAMSIGYNNLEPSKYISTNYGSYDYLTLLERKMRELSIGAGFVEVFNFVLIKNEKILDSKYVKILNPISEEYNAVRNSLIPILLDFLSKNQHAKFPIRIFETGDVVIYDSSTDTGFRNDKRAAYAIMDNKVSYEDVQAPIHYILKTLGIEVNYKEENNDIFIEGRSASIVYENEKIGVIGEINPDVLIRFGIEYPTVIAELYITEIAKKLNKR.

A B5 domain is found at Leu268–Pro343. Asp321, Asp327, Glu330, and Asp331 together coordinate Mg(2+).

This sequence belongs to the phenylalanyl-tRNA synthetase beta subunit family. Type 2 subfamily. Tetramer of two alpha and two beta subunits. Mg(2+) serves as cofactor.

The protein resides in the cytoplasm. It catalyses the reaction tRNA(Phe) + L-phenylalanine + ATP = L-phenylalanyl-tRNA(Phe) + AMP + diphosphate + H(+). The polypeptide is Phenylalanine--tRNA ligase beta subunit (Saccharolobus solfataricus (strain ATCC 35092 / DSM 1617 / JCM 11322 / P2) (Sulfolobus solfataricus)).